A 982-amino-acid polypeptide reads, in one-letter code: ATP-dependent DNA helicase Q5 (982 aa).

In terms of domain architecture, Helicase ATP-binding spans 39–213 (MAVVKGAEDV…FAALHLKQPV (175 aa)). 52-59 (MPTGAGKS) is a binding site for ATP. Positions 157-160 (DEAH) match the DEAH box motif. Residues 241-398 (NLRDFCLKAL…NKPSDKATLL (158 aa)) enclose the Helicase C-terminal domain. Zn(2+) contacts are provided by C412, C428, C432, and C435. Residues S489 and S492 each carry the phosphoserine modification. The tract at residues 491–621 (GSGDEGRDEA…ASKDGQLYDM (131 aa)) is interaction with POLR2A. T527 carries the phosphothreonine modification. The tract at residues 653 to 726 (PKRVGAGFSK…ALGSSVNCGD (74 aa)) is interaction with RAD51. 2 disordered regions span residues 675–797 (GKSH…PGKC) and 812–893 (QTEG…AQEP). S728 carries the post-translational modification Phosphoserine; by CDK1.

This sequence belongs to the helicase family. RecQ subfamily. Monomer. Interacts with TOP2A, TOP3A and TOP3B. Interacts with RNA polymerase II subunit POLR2A. Identified in a complex with the RNA polymerase II core bound to DNA. Interacts with RAD51. Interacts with WRN; this interaction stimulates WRN helicase activity on DNA fork duplexes. Interacts with MUS1; this interaction promotes MUS81-dependent mitotic DNA synthesis. The cofactor is Zn(2+). Post-translationally, phosphorylated by CDK1 at Ser-728; this phosphorylation is required for RECQL5-mediated disruption of RAD51 filaments on stalled replication forks.

The protein localises to the nucleus. It localises to the nucleoplasm. The enzyme catalyses Couples ATP hydrolysis with the unwinding of duplex DNA by translocating in the 3'-5' direction.. It catalyses the reaction ATP + H2O = ADP + phosphate + H(+). Its function is as follows. DNA helicase that plays an important role in DNA replication, transcription and repair. Binds to the RNA polymerase II subunit POLR2A during transcription elongation and suppresses transcription-associated genomic instability. Also associates with POLR1A and enforces the stability of ribosomal DNA arrays. Plays an important role in mitotic chromosome separation after cross-over events and cell cycle progress. Mechanistically, removes RAD51 filaments protecting stalled replication forks at common fragile sites and stimulates MUS81-EME1 endonuclease leading to mitotic DNA synthesis. Required for efficient DNA repair, including repair of inter-strand cross-links. Stimulates DNA decatenation mediated by TOP2A. Prevents sister chromatid exchange and homologous recombination. This is ATP-dependent DNA helicase Q5 (Recql5) from Mus musculus (Mouse).